Reading from the N-terminus, the 206-residue chain is Ribosomal RNA small subunit methyltransferase G (206 aa).

S-adenosyl-L-methionine is bound by residues Gly73, Leu78, 124-125 (VE), and Arg139.

It belongs to the methyltransferase superfamily. RNA methyltransferase RsmG family.

Its subcellular location is the cytoplasm. It catalyses the reaction guanosine(527) in 16S rRNA + S-adenosyl-L-methionine = N(7)-methylguanosine(527) in 16S rRNA + S-adenosyl-L-homocysteine. In terms of biological role, specifically methylates the N7 position of guanine in position 527 of 16S rRNA. This is Ribosomal RNA small subunit methyltransferase G from Yersinia pseudotuberculosis serotype O:1b (strain IP 31758).